We begin with the raw amino-acid sequence, 124 residues long: Fluoride-specific ion channel FluC (124 aa).

Helical transmembrane passes span 6 to 26 (FAVA…ATWV), 34 to 54 (FYLA…YLYA), 69 to 89 (ALII…LDAL), and 101 to 121 (FAYV…GLAL). Positions 76 and 79 each coordinate Na(+).

Belongs to the fluoride channel Fluc/FEX (TC 1.A.43) family.

The protein localises to the cell inner membrane. It carries out the reaction fluoride(in) = fluoride(out). Its activity is regulated as follows. Na(+) is not transported, but it plays an essential structural role and its presence is essential for fluoride channel function. Its function is as follows. Fluoride-specific ion channel. Important for reducing fluoride concentration in the cell, thus reducing its toxicity. In Stutzerimonas stutzeri (strain A1501) (Pseudomonas stutzeri), this protein is Fluoride-specific ion channel FluC.